Reading from the N-terminus, the 135-residue chain is U-myrmeciitoxin(01)-Mg7a (135 aa).

The N-terminal stretch at 1–21 is a signal peptide; sequence MKLSCLSLALAIILLLAIVHS. Positions 22–72 are excised as a propeptide; the sequence is PNMEVKALAGPEADAIGFADAFGEADAFGEADAFGEADAFGEADAFGEADA. A disordered region spans residues 69-95; sequence EADAKRSKSSSKTKPKKPKKPKKKIKI. Residues 75-93 are compositionally biased toward basic residues; sequence SKSSSKTKPKKPKKPKKKI. S120 carries an O-linked (GalNAc...) serine glycan. 2 O-linked (GalNAc...) threonine glycosylation sites follow: T129 and T130.

The protein belongs to the formicidae venom precursor-01 superfamily. In terms of processing, glycosylation is critical to maintaining the aqueous solubility of this protein, but does not directly contribute to its activity. Expressed by the venom gland.

Its subcellular location is the secreted. The protein resides in the target cell membrane. In terms of biological role, neurotoxin that triggers pain behavior and inflammation in mammals, and is paralytic and lethal to insects. Causes a time-dependent increase in cell leak current. May act by targeting membranes. The chain is U-myrmeciitoxin(01)-Mg7a from Myrmecia gulosa (Red bulldog ant).